The sequence spans 153 residues: 6,7-dimethyl-8-ribityllumazine synthase (153 aa).

5-amino-6-(D-ribitylamino)uracil-binding positions include phenylalanine 21, 55 to 57, and 79 to 81; these read AFE and TVI. 84–85 is a (2S)-2-hydroxy-3-oxobutyl phosphate binding site; that stretch reads AT. Histidine 87 functions as the Proton donor in the catalytic mechanism. 5-amino-6-(D-ribitylamino)uracil is bound at residue phenylalanine 112. Arginine 126 is a (2S)-2-hydroxy-3-oxobutyl phosphate binding site.

It belongs to the DMRL synthase family. As to quaternary structure, forms an icosahedral capsid composed of 60 subunits, arranged as a dodecamer of pentamers.

The catalysed reaction is (2S)-2-hydroxy-3-oxobutyl phosphate + 5-amino-6-(D-ribitylamino)uracil = 6,7-dimethyl-8-(1-D-ribityl)lumazine + phosphate + 2 H2O + H(+). The protein operates within cofactor biosynthesis; riboflavin biosynthesis; riboflavin from 2-hydroxy-3-oxobutyl phosphate and 5-amino-6-(D-ribitylamino)uracil: step 1/2. In terms of biological role, catalyzes the formation of 6,7-dimethyl-8-ribityllumazine by condensation of 5-amino-6-(D-ribitylamino)uracil with 3,4-dihydroxy-2-butanone 4-phosphate. This is the penultimate step in the biosynthesis of riboflavin. The polypeptide is 6,7-dimethyl-8-ribityllumazine synthase (Bacillus anthracis (strain A0248)).